The chain runs to 191 residues: NAD(P)H-quinone oxidoreductase subunit L, chloroplastic (191 aa).

The N-terminal 46 residues, 1–46, are a transit peptide targeting the chloroplast; the sequence is MSRCGSLGLYAPNALPSLSLKPRSVKSPFCITSHTKPNDTLLHNVN. 3 helical membrane-spanning segments follow: residues 61-81, 93-113, and 129-149; these read TILA…ALAI, VVLD…PIIM, and YLQF…APFL.

Belongs to the NDH complex subunit L family. In terms of assembly, part of the chloroplast NDH complex, composed of a mixture of chloroplast and nucleus encoded subunits. Component of the NDH subcomplex A, at least composed of ndhH, ndhI, ndhJ, ndhK, ndhL, ndhM, ndhN and ndhO.

It localises to the plastid. It is found in the chloroplast thylakoid membrane. It catalyses the reaction a plastoquinone + NADH + (n+1) H(+)(in) = a plastoquinol + NAD(+) + n H(+)(out). It carries out the reaction a plastoquinone + NADPH + (n+1) H(+)(in) = a plastoquinol + NADP(+) + n H(+)(out). In terms of biological role, NDH shuttles electrons from NAD(P)H:plastoquinone, via FMN and iron-sulfur (Fe-S) centers, to quinones in the photosynthetic chain and possibly in a chloroplast respiratory chain. The immediate electron acceptor for the enzyme in this species is believed to be plastoquinone. Couples the redox reaction to proton translocation, and thus conserves the redox energy in a proton gradient. This is NAD(P)H-quinone oxidoreductase subunit L, chloroplastic from Arabidopsis thaliana (Mouse-ear cress).